Here is a 257-residue protein sequence, read N- to C-terminus: UPF0246 protein Sbal223_3241 (257 aa).

Belongs to the UPF0246 family.

The chain is UPF0246 protein Sbal223_3241 from Shewanella baltica (strain OS223).